We begin with the raw amino-acid sequence, 239 residues long: Glucosamine-6-phosphate deaminase (239 aa).

Aspartate 62 serves as the catalytic Proton acceptor; for enolization step. Asparagine 128 serves as the catalytic For ring-opening step. Histidine 130 (proton acceptor; for ring-opening step) is an active-site residue. Catalysis depends on glutamate 135, which acts as the For ring-opening step.

It belongs to the glucosamine/galactosamine-6-phosphate isomerase family. NagB subfamily.

It carries out the reaction alpha-D-glucosamine 6-phosphate + H2O = beta-D-fructose 6-phosphate + NH4(+). It functions in the pathway amino-sugar metabolism; N-acetylneuraminate degradation; D-fructose 6-phosphate from N-acetylneuraminate: step 5/5. Its function is as follows. Catalyzes the reversible isomerization-deamination of glucosamine 6-phosphate (GlcN6P) to form fructose 6-phosphate (Fru6P) and ammonium ion. This is Glucosamine-6-phosphate deaminase from Lactobacillus johnsonii (strain CNCM I-12250 / La1 / NCC 533).